Reading from the N-terminus, the 68-residue chain is Small ribosomal subunit protein eS17 (68 aa).

Belongs to the eukaryotic ribosomal protein eS17 family.

This chain is Small ribosomal subunit protein eS17, found in Staphylothermus marinus (strain ATCC 43588 / DSM 3639 / JCM 9404 / F1).